Here is a 143-residue protein sequence, read N- to C-terminus: Sirohydrochlorin cobaltochelatase (143 aa).

The active-site Proton acceptor is the His-9. Position 9 (His-9) interacts with Co(2+). Ni(2+) is bound at residue His-9. Residues Glu-45 and 70–75 (LAHGNH) contribute to the substrate site. His-75 is a binding site for Co(2+). His-75 is a binding site for Ni(2+).

It belongs to the CbiX family. CbiXS subfamily. In terms of assembly, homotetramer; dimer of dimers.

It catalyses the reaction Co-sirohydrochlorin + 2 H(+) = sirohydrochlorin + Co(2+). It carries out the reaction Ni-sirohydrochlorin + 2 H(+) = sirohydrochlorin + Ni(2+). It participates in cofactor biosynthesis; adenosylcobalamin biosynthesis; cob(II)yrinate a,c-diamide from sirohydrochlorin (anaerobic route): step 1/10. Its function is as follows. Catalyzes the insertion of Co(2+) into sirohydrochlorin as part of the anaerobic pathway to cobalamin biosynthesis. Involved in the biosynthesis of the unique nickel-containing tetrapyrrole coenzyme F430, the prosthetic group of methyl-coenzyme M reductase (MCR), which plays a key role in methanogenesis and anaerobic methane oxidation. Catalyzes the insertion of Ni(2+) into sirohydrochlorin to yield Ni-sirohydrochlorin. The polypeptide is Sirohydrochlorin cobaltochelatase (Methanococcus aeolicus (strain ATCC BAA-1280 / DSM 17508 / OCM 812 / Nankai-3)).